The chain runs to 266 residues: MPTIPSVYRLQQPQMQLNGVAPTHSFSKQYPGLGSTVSGNTSLNNSAICIINAYASGGTLNKKNTTKKNNTVSNNNSVSTTSFFISKPNFSHTNSKVTIQLFYYTASPKNHLVNTSNNDLTTVSSHFSDLSTTLAQLYQKEVHVIATRLYYPYLNSDILSQYLAHNGPSNTFMDFQEAILTNPSLHKTNLPAHISGIKVQVSGRLVTETVIPRITVKSYLIGSFQRNSNNTANKLGDFVTSIDYSKFTTKNELGAFTVKVWICQRS.

Belongs to the universal ribosomal protein uS3 family.

The protein localises to the mitochondrion. In Mycosarcoma maydis (Corn smut fungus), this protein is Small ribosomal subunit protein uS3m (MRPS3).